The primary structure comprises 273 residues: NH(3)-dependent NAD(+) synthetase (273 aa).

46 to 53 (GISGGQDS) serves as a coordination point for ATP. Asp52 contributes to the Mg(2+) binding site. Arg139 contacts deamido-NAD(+). Thr159 contributes to the ATP binding site. Glu164 is a binding site for Mg(2+). Deamido-NAD(+) is bound by residues Lys172 and Asp179. ATP contacts are provided by Lys188 and Thr210. Deamido-NAD(+) is bound at residue 259–260 (HK).

Belongs to the NAD synthetase family. As to quaternary structure, homodimer.

The enzyme catalyses deamido-NAD(+) + NH4(+) + ATP = AMP + diphosphate + NAD(+) + H(+). It participates in cofactor biosynthesis; NAD(+) biosynthesis; NAD(+) from deamido-NAD(+) (ammonia route): step 1/1. Its function is as follows. Catalyzes the ATP-dependent amidation of deamido-NAD to form NAD. Uses ammonia as a nitrogen source. This is NH(3)-dependent NAD(+) synthetase from Streptococcus agalactiae serotype Ia (strain ATCC 27591 / A909 / CDC SS700).